A 300-amino-acid chain; its full sequence is uncharacterized protein (300 aa).

This is an uncharacterized protein from Ictalurid herpesvirus 1 (strain Auburn) (IcHV-1).